Reading from the N-terminus, the 165-residue chain is Putative 4-hydroxy-4-methyl-2-oxoglutarate aldolase (165 aa).

Residues 80 to 83 and R102 contribute to the substrate site; that span reads GGNL. D103 provides a ligand contact to a divalent metal cation.

It belongs to the class II aldolase/RraA-like family. Homotrimer. A divalent metal cation serves as cofactor.

The enzyme catalyses 4-hydroxy-4-methyl-2-oxoglutarate = 2 pyruvate. It catalyses the reaction oxaloacetate + H(+) = pyruvate + CO2. In terms of biological role, catalyzes the aldol cleavage of 4-hydroxy-4-methyl-2-oxoglutarate (HMG) into 2 molecules of pyruvate. Also contains a secondary oxaloacetate (OAA) decarboxylase activity due to the common pyruvate enolate transition state formed following C-C bond cleavage in the retro-aldol and decarboxylation reactions. The polypeptide is Putative 4-hydroxy-4-methyl-2-oxoglutarate aldolase (Burkholderia mallei (strain NCTC 10247)).